The chain runs to 282 residues: tRNA uridine(34) hydroxylase (282 aa).

Residues 128–222 (EGRPVVMLDT…YFEEVGGSHY (95 aa)) form the Rhodanese domain. The active-site Cysteine persulfide intermediate is Cys182.

The protein belongs to the TrhO family.

The enzyme catalyses uridine(34) in tRNA + AH2 + O2 = 5-hydroxyuridine(34) in tRNA + A + H2O. Its function is as follows. Catalyzes oxygen-dependent 5-hydroxyuridine (ho5U) modification at position 34 in tRNAs. The chain is tRNA uridine(34) hydroxylase from Cupriavidus necator (strain ATCC 17699 / DSM 428 / KCTC 22496 / NCIMB 10442 / H16 / Stanier 337) (Ralstonia eutropha).